The sequence spans 300 residues: Acetylglutamate kinase (300 aa).

Substrate-binding positions include 73-74 (GG), Arg-95, and Asn-197.

Belongs to the acetylglutamate kinase family. ArgB subfamily.

The protein localises to the cytoplasm. The enzyme catalyses N-acetyl-L-glutamate + ATP = N-acetyl-L-glutamyl 5-phosphate + ADP. It participates in amino-acid biosynthesis; L-arginine biosynthesis; N(2)-acetyl-L-ornithine from L-glutamate: step 2/4. Catalyzes the ATP-dependent phosphorylation of N-acetyl-L-glutamate. The protein is Acetylglutamate kinase of Bordetella avium (strain 197N).